We begin with the raw amino-acid sequence, 327 residues long: tRNA pseudouridine synthase B (327 aa).

Aspartate 83 acts as the Nucleophile in catalysis.

This sequence belongs to the pseudouridine synthase TruB family. Type 1 subfamily.

It catalyses the reaction uridine(55) in tRNA = pseudouridine(55) in tRNA. Its function is as follows. Responsible for synthesis of pseudouridine from uracil-55 in the psi GC loop of transfer RNAs. The protein is tRNA pseudouridine synthase B of Mesomycoplasma hyopneumoniae (strain 232) (Mycoplasma hyopneumoniae).